A 156-amino-acid chain; its full sequence is Small ribosomal subunit protein uS7 (156 aa).

The protein belongs to the universal ribosomal protein uS7 family. In terms of assembly, part of the 30S ribosomal subunit. Contacts proteins S9 and S11.

In terms of biological role, one of the primary rRNA binding proteins, it binds directly to 16S rRNA where it nucleates assembly of the head domain of the 30S subunit. Is located at the subunit interface close to the decoding center, probably blocks exit of the E-site tRNA. The protein is Small ribosomal subunit protein uS7 of Nitratiruptor sp. (strain SB155-2).